A 210-amino-acid chain; its full sequence is MSLGLVGRKCGMTRIFTEDGVSIPVTVVQVESNKVTQIKTTETDGYNAIQVTTGFKKRSNVNKPMAGHYAKASVEPGRGLWEFAIDNASDYEVGASIDATIFEAGQKVDVRGVSKGKGFQGGVKRHNFATQDATHGNSLSHRVHGSTGQNQTPGRVFKNKKMAGHLGSENVTIQSLEVVRVDAENGLLLLKGGIPGSVGGDVIVTPAVKS.

A disordered region spans residues 133–152; the sequence is ATHGNSLSHRVHGSTGQNQT. Gln-151 is modified (N5-methylglutamine).

This sequence belongs to the universal ribosomal protein uL3 family. In terms of assembly, part of the 50S ribosomal subunit. Forms a cluster with proteins L14 and L19. Methylated by PrmB.

One of the primary rRNA binding proteins, it binds directly near the 3'-end of the 23S rRNA, where it nucleates assembly of the 50S subunit. This Francisella philomiragia subsp. philomiragia (strain ATCC 25017 / CCUG 19701 / FSC 153 / O#319-036) protein is Large ribosomal subunit protein uL3.